A 383-amino-acid polypeptide reads, in one-letter code: Homoserine O-succinyltransferase (383 aa).

One can recognise an AB hydrolase-1 domain in the interval 51–360 (NAILLCHALS…EAEHGHDSFL (310 aa)). Catalysis depends on serine 157, which acts as the Nucleophile. Position 227 (arginine 227) interacts with substrate. Residues aspartate 323 and histidine 356 contribute to the active site. Substrate is bound at residue aspartate 357.

It belongs to the AB hydrolase superfamily. MetX family. Homodimer.

It localises to the cytoplasm. The catalysed reaction is L-homoserine + succinyl-CoA = O-succinyl-L-homoserine + CoA. It participates in amino-acid biosynthesis; L-methionine biosynthesis via de novo pathway; O-succinyl-L-homoserine from L-homoserine: step 1/1. Functionally, transfers a succinyl group from succinyl-CoA to L-homoserine, forming succinyl-L-homoserine. The sequence is that of Homoserine O-succinyltransferase from Acidithiobacillus ferrooxidans (strain ATCC 23270 / DSM 14882 / CIP 104768 / NCIMB 8455) (Ferrobacillus ferrooxidans (strain ATCC 23270)).